We begin with the raw amino-acid sequence, 281 residues long: NADPH-dependent 7-cyano-7-deazaguanine reductase (281 aa).

81–83 (VES) contacts substrate. Residue 83–84 (SK) participates in NADPH binding. C188 acts as the Thioimide intermediate in catalysis. Residue D195 is the Proton donor of the active site. 227–228 (HE) is a binding site for substrate. 256-257 (RG) is an NADPH binding site. A disordered region spans residues 261–281 (INPLRTSHPQGLPRNMRTARQ).

It belongs to the GTP cyclohydrolase I family. QueF type 2 subfamily. In terms of assembly, homodimer.

The protein resides in the cytoplasm. It carries out the reaction 7-aminomethyl-7-carbaguanine + 2 NADP(+) = 7-cyano-7-deazaguanine + 2 NADPH + 3 H(+). It functions in the pathway tRNA modification; tRNA-queuosine biosynthesis. Its function is as follows. Catalyzes the NADPH-dependent reduction of 7-cyano-7-deazaguanine (preQ0) to 7-aminomethyl-7-deazaguanine (preQ1). This Verminephrobacter eiseniae (strain EF01-2) protein is NADPH-dependent 7-cyano-7-deazaguanine reductase.